The primary structure comprises 548 residues: Synaptic vesicle 2-related protein (548 aa).

The Cytoplasmic segment spans residues methionine 1–serine 87. A phosphoserine mark is found at serine 25 and serine 31. A helical membrane pass occupies residues valine 88–alanine 108. The Vesicular segment spans residues proline 109–valine 122. The chain crosses the membrane as a helical span at residues alanine 123–isoleucine 143. Topologically, residues serine 144–serine 156 are cytoplasmic. Residues valine 157–leucine 177 form a helical membrane-spanning segment. At valine 178–arginine 180 the chain is on the vesicular side. A helical transmembrane segment spans residues glycine 181–leucine 201. Residues proline 202–cysteine 209 lie on the Cytoplasmic side of the membrane. Residues isoleucine 210 to phenylalanine 230 traverse the membrane as a helical segment. The Vesicular portion of the chain corresponds to valine 231–arginine 238. Residues tryptophan 239–proline 259 form a helical membrane-spanning segment. Residues glutamate 260–threonine 316 are Cytoplasmic-facing. A helical membrane pass occupies residues threonine 317–leucine 337. Residues threonine 338–tyrosine 373 lie on the Vesicular side of the membrane. Residues methionine 374–isoleucine 394 form a helical membrane-spanning segment. Over aspartate 395–lysine 401 the chain is Cytoplasmic. A helical transmembrane segment spans residues threonine 402–glycine 422. The Vesicular segment spans residues arginine 423 to asparagine 424. The chain crosses the membrane as a helical span at residues valine 425–tyrosine 445. The Cytoplasmic portion of the chain corresponds to valine 446–arginine 457. The chain crosses the membrane as a helical span at residues alanine 458–isoleucine 478. Topologically, residues alanine 479–leucine 489 are vesicular. Residues threonine 490 to isoleucine 510 form a helical membrane-spanning segment. Residues glutamate 511–glutamate 548 are Cytoplasmic-facing. Residue serine 542 is modified to Phosphoserine.

It belongs to the major facilitator superfamily.

It is found in the cytoplasmic vesicle. Its subcellular location is the secretory vesicle. It localises to the synaptic vesicle membrane. The chain is Synaptic vesicle 2-related protein (SVOP) from Pongo abelii (Sumatran orangutan).